The primary structure comprises 252 residues: MESLLQTIKLMLRYIQKALILFFLFLYVVVGKVLMFLFPQTMASVLKSRFEISGVHDPKFQYEDWGPTFFTYKFLRSVLEIMWMRLEDEAFVGHSAPNTPVVDLSGELHHIWDYLQGTRPLVLSFGSCTUPPFLFRLGEFNKLVNEFNSIADFLIIYIDEAHAADEWALKNNLHIKKHRSLQDRLAAAKRLMEESPSCPVVLDTMSNLCSAKYAALPERLYILQEGKIIYKGKMGPWGYKPEEVCSVLEKKK.

Over 1–17 (MESLLQTIKLMLRYIQK) the chain is Extracellular. A helical; Signal-anchor for type III membrane protein membrane pass occupies residues 18–38 (ALILFFLFLYVVVGKVLMFLF). Residues 39 to 252 (PQTMASVLKS…EVCSVLEKKK (214 aa)) are Cytoplasmic-facing. Selenocysteine 130 is an active-site residue. Selenocysteine 130 is a non-standard amino acid (selenocysteine).

The protein belongs to the iodothyronine deiodinase family. Predominantly monomer. Can form homodimers but homodimerization is not essential for enzyme activity.

It localises to the cell membrane. The protein localises to the endoplasmic reticulum membrane. The protein resides in the basolateral cell membrane. It carries out the reaction 3,3',5-triiodo-L-thyronine + iodide + A + H(+) = L-thyroxine + AH2. It catalyses the reaction 3,3',5'-triiodo-L-thyronine + iodide + A + H(+) = L-thyroxine + AH2. The catalysed reaction is 3,3'-diiodo-L-thyronine + iodide + A + H(+) = 3,3',5'-triiodo-L-thyronine + AH2. The enzyme catalyses 3,3'-diiodo-L-thyronine + iodide + A + H(+) = 3,3',5-triiodo-L-thyronine + AH2. It carries out the reaction 3'-iodo-L-thyronine + iodide + A + H(+) = 3',5'-diiodo-L-thyronine + AH2. It catalyses the reaction 3-iodo-L-thyronine + iodide + A + H(+) = 3,5-diiodo-L-thyronine + AH2. The catalysed reaction is 3-iodo-L-thyronine + iodide + A + H(+) = 3,3'-diiodo-L-thyronine + AH2. The enzyme catalyses 3,3'-diiodothyronamine + iodide + A + H(+) = 3,3',5'-triiodothyronamine + AH2. It carries out the reaction 3'-iodothyronamine + iodide + A + H(+) = 3',5'-diiodothyronamine + AH2. It catalyses the reaction 3-iodothyronamine + iodide + A + H(+) = 3,3'-diiodothyronamine + AH2. The catalysed reaction is 3,3'-diiodothyronamine + iodide + A + H(+) = 3,3',5-triiodothyronamine + AH2. The enzyme catalyses 3-iodothyronamine + iodide + A + H(+) = 3,5-diiodothyronamine + AH2. It carries out the reaction 3,3'-diiodo-L-thyronine sulfate + iodide + A + H(+) = 3,3',5'-triiodo-L-thyronine sulfate + AH2. It catalyses the reaction 3,3',5'-triiodo-L-thyronine sulfate + iodide + A + H(+) = L-thyroxine sulfate + AH2. The catalysed reaction is 3,3'-diiodo-L-thyronine sulfate + iodide + A + H(+) = 3,3',5-triiodo-L-thyronine sulfate + AH2. Lacks sensitivity to 6-n-propylthiouracil. Plays a crucial role in the metabolism of thyroid hormones (TH) and has specific roles in TH activation and inactivation by deiodination. Catalyzes the deiodination of L-thyroxine (T4) to 3,5,3'-triiodothyronine (T3) and 3,3',5'-triiodothyronine (rT3) to 3,3'-diiodothyronine (3,3'-T2) via outer-ring deiodination (ORD). Catalyzes the deiodiantion of T4 to rT3 and T3 to 3,3'-T2 via inner-ring deiodination (IRD). Catalyzes the deiodination of 3',5'-diiodothyronine (3',5'-T2) to 3'-monoiodothyronine (3'-T1) via ORD. Catalyzes the deiodination of 3,5-diiodothyronine (3,5-T2) to 3-monoiodothyronine (3-T1) and 3,3'-T2 to 3-T1 via IRD. Catalyzes the phenolic ring deiodinations of 3,3',5'-triiodothyronamine, 3',5'-diiodothyronamine and 3,3'-diiodothyronamine as well as tyrosyl ring deiodinations of 3,5,3'-triiodothyronamine and 3,5-diiodothyronamine. Catalyzes the deiodination of L-thyroxine sulfate and 3,3',5-triiodo-L-thyronine sulfate via IRD and of 3,3',5'-triiodo-L-thyronine sulfate via ORD. The chain is Type I iodothyronine deiodinase (dio1) from Xenopus laevis (African clawed frog).